Reading from the N-terminus, the 136-residue chain is Basic phospholipase A2 Tgc-K49 (136 aa).

A signal peptide spans Met-1–Gly-15. Intrachain disulfides connect Cys-41–Cys-130, Cys-43–Cys-59, Cys-58–Cys-110, Cys-64–Cys-136, Cys-65–Cys-103, Cys-72–Cys-96, and Cys-90–Cys-101. His-62 is an active-site residue. Residue Asp-104 is part of the active site.

The protein belongs to the phospholipase A2 family. Group II subfamily. K49 sub-subfamily. Expressed by the venom gland.

It is found in the secreted. It catalyses the reaction a 1,2-diacyl-sn-glycero-3-phosphocholine + H2O = a 1-acyl-sn-glycero-3-phosphocholine + a fatty acid + H(+). Functionally, PLA2 catalyzes the calcium-dependent hydrolysis of the 2-acyl groups in 3-sn-phosphoglycerides. This chain is Basic phospholipase A2 Tgc-K49, found in Trimeresurus gracilis (Kikuchi habu).